The primary structure comprises 323 residues: D-alanine--D-alanine ligase (323 aa).

The ATP-grasp domain occupies R121–K317. P147–E199 is an ATP binding site. Mg(2+) is bound by residues E270, E284, and N286.

This sequence belongs to the D-alanine--D-alanine ligase family. Mg(2+) is required as a cofactor. Mn(2+) serves as cofactor.

It localises to the cytoplasm. The enzyme catalyses 2 D-alanine + ATP = D-alanyl-D-alanine + ADP + phosphate + H(+). It participates in cell wall biogenesis; peptidoglycan biosynthesis. Cell wall formation. The polypeptide is D-alanine--D-alanine ligase (Rickettsia peacockii (strain Rustic)).